The sequence spans 330 residues: Putative ADP-ribosyl glycohydrolase L543 (330 aa).

Belongs to the ADP-ribosylglycohydrolase family.

In Acanthamoeba polyphaga mimivirus (APMV), this protein is Putative ADP-ribosyl glycohydrolase L543.